We begin with the raw amino-acid sequence, 510 residues long: NAD(P)H-quinone oxidoreductase subunit 2 B, chloroplastic (510 aa).

A run of 13 helical transmembrane segments spans residues 24–44, 57–77, 99–119, 124–144, 150–170, 183–203, 227–247, 295–315, 323–343, 347–367, 395–415, 418–438, and 484–504; these read LLLFHGSFIFPECILIFGLIL, IPWLYFISSTSLVMSITALLF, IFQFLILLCSTLCIPLSVEYI, MAITEFLLFVLTATLGGMFLC, ITIFVAPECFSLCSYLLSGYT, YLLMGGASSSILVHGFSWLYG, PGISIALIFITVGIGFKLSPA, WHLLLEILAILSMILGNLIAI, MLAYSSIGQIGYVIIGIIVGD, GYASMITYMLFYISMNLGTFA, ALSSALCLLSLGGLPPLAGFF, LHLFWCGWQAGLYFLVSIGLL, and MIVCVIASTIPGISMNPIIAI.

The protein belongs to the complex I subunit 2 family. NDH is composed of at least 16 different subunits, 5 of which are encoded in the nucleus.

The protein localises to the plastid. It is found in the chloroplast thylakoid membrane. It carries out the reaction a plastoquinone + NADH + (n+1) H(+)(in) = a plastoquinol + NAD(+) + n H(+)(out). It catalyses the reaction a plastoquinone + NADPH + (n+1) H(+)(in) = a plastoquinol + NADP(+) + n H(+)(out). NDH shuttles electrons from NAD(P)H:plastoquinone, via FMN and iron-sulfur (Fe-S) centers, to quinones in the photosynthetic chain and possibly in a chloroplast respiratory chain. The immediate electron acceptor for the enzyme in this species is believed to be plastoquinone. Couples the redox reaction to proton translocation, and thus conserves the redox energy in a proton gradient. This Liriodendron tulipifera (Tuliptree) protein is NAD(P)H-quinone oxidoreductase subunit 2 B, chloroplastic.